A 395-amino-acid polypeptide reads, in one-letter code: MGIKHLYQVISENAPDAIKTGEIKNHFGRKVAIDASMSIYSFLIAVRSEGQQLMSESGETTSHLMGMFYRTLRMVDNGIKPLYVFDGAPPKLKSGELAKRVARKAEATEAHEEAKETGTAEDIEKFSRRTVRVTREHNAECKKLLELMGIPFINAPTEAEAQCAVLARAGKVYAAASEDMDTLCFESPILLRHLTFSEQRKEPIQEIHLDRALEGLDMDRAQFIDLCILLGCDYLEPIPKVGATTALSLIKEHKSLEKVLEFMKNDPKKKFVVPEDWPYEDARELFTNPDVRPADHPECDFKWEAPNVEGLIEFLVGDKGFNEDRVRNGAARLSKHLKTAQQSRLEGFFKPVARTEDEKASLKRKHDEKLQQQKKKKKEDAKAKKEAKAKPRGAA.

Residues Met1–Lys104 are N-domain. Mg(2+) is bound at residue Asp34. Positions 47 and 70 each coordinate DNA. Mg(2+) contacts are provided by Asp86, Glu158, Glu160, Asp179, and Asp181. Residues Asp122 to His253 are I-domain. Glu158 contributes to the DNA binding site. DNA is bound by residues Gly231 and Asp233. Asp233 contributes to the Mg(2+) binding site. The interval Gln341 to Phe349 is interaction with PCNA. The disordered stretch occupies residues Leu345–Ala395. Basic and acidic residues-rich tracts occupy residues Ala353–Gln371 and Lys378–Ala389.

It belongs to the XPG/RAD2 endonuclease family. FEN1 subfamily. Interacts with PCNA. Three molecules of fen1 bind to one PCNA trimer with each molecule binding to one PCNA monomer. PCNA stimulates the nuclease activity without altering cleavage specificity. Mg(2+) serves as cofactor. In terms of processing, phosphorylated. Phosphorylation upon DNA damage induces relocalization to the nuclear plasma.

Its subcellular location is the nucleus. It localises to the nucleolus. It is found in the nucleoplasm. The protein localises to the mitochondrion. Structure-specific nuclease with 5'-flap endonuclease and 5'-3' exonuclease activities involved in DNA replication and repair. During DNA replication, cleaves the 5'-overhanging flap structure that is generated by displacement synthesis when DNA polymerase encounters the 5'-end of a downstream Okazaki fragment. It enters the flap from the 5'-end and then tracks to cleave the flap base, leaving a nick for ligation. Also involved in the long patch base excision repair (LP-BER) pathway, by cleaving within the apurinic/apyrimidinic (AP) site-terminated flap. Acts as a genome stabilization factor that prevents flaps from equilibrating into structures that lead to duplications and deletions. Also possesses 5'-3' exonuclease activity on nicked or gapped double-stranded DNA, and exhibits RNase H activity. Also involved in replication and repair of rDNA and in repairing mitochondrial DNA. This Penicillium rubens (strain ATCC 28089 / DSM 1075 / NRRL 1951 / Wisconsin 54-1255) (Penicillium chrysogenum) protein is Flap endonuclease 1 (fen1).